A 153-amino-acid polypeptide reads, in one-letter code: Ribosome maturation factor RimP (153 aa).

The protein belongs to the RimP family.

It localises to the cytoplasm. Functionally, required for maturation of 30S ribosomal subunits. This chain is Ribosome maturation factor RimP, found in Coxiella burnetii (strain RSA 331 / Henzerling II).